Consider the following 625-residue polypeptide: Zinc finger protein 652-A (625 aa).

The interval 80-255 (FFRDSKPINE…PSDKAKSEEK (176 aa)) is disordered. Basic and acidic residues predominate over residues 82–100 (RDSKPINEVHSVKGERENS). Over residues 101 to 127 (GESEEEEDDDDDDDDEDDEEGEEDEDE) the composition is skewed to acidic residues. Positions 150–166 (KGDKGVAQDSSHIKTSS) are enriched in basic and acidic residues. Residues 167-186 (DDEEGDSGEDDQDSHEDEEN) are compositionally biased toward acidic residues. Basic and acidic residues predominate over residues 240-255 (PKEPKSPSDKAKSEEK). The segment at 258–281 (LTCDKCPRVFNTRWYLEKHMNVTH) adopts a C2H2-type 1 zinc-finger fold. The C2H2-type 2; degenerate zinc finger occupies 285 to 307 (QICDKCGKKFVLESELSLHLQTD). C2H2-type zinc fingers lie at residues 312 to 335 (IQCITCNKTFKKLWSLHEHIKIVH), 342 to 364 (FSCEICEKKFYTMAHVRKHLVAH), 370 to 392 (FTCETCGKSFKRSMSLKVHSLQH), 398 to 420 (FRCENCDERFQYKYQLRSHMSIH), 426 to 448 (FMCQWCGKDFNMKQYFDEHMKTH), and 454 to 476 (FICEICGKSFTSRPNMKRHRRTH). A C2H2-type 9; degenerate zinc finger spans residues 482 to 505 (YPCDVCGMRFRFSNMLKAHKEKCF).

It belongs to the krueppel C2H2-type zinc-finger protein family.

It is found in the nucleus. May be involved in transcriptional regulation. The protein is Zinc finger protein 652-A (znf652-a) of Xenopus laevis (African clawed frog).